A 170-amino-acid chain; its full sequence is Lipoprotein signal peptidase (170 aa).

The next 3 helical transmembrane spans lie at 12 to 32, 67 to 87, and 93 to 113; these read WYWV…WVLA, WQRW…TVWL, and SLLK…GNLV. Active-site residues include aspartate 123 and aspartate 141. The helical transmembrane segment at 137 to 157 threads the bilayer; that stretch reads FNIADSAIFIGAVLIIWDSFF.

This sequence belongs to the peptidase A8 family.

Its subcellular location is the cell inner membrane. It carries out the reaction Release of signal peptides from bacterial membrane prolipoproteins. Hydrolyzes -Xaa-Yaa-Zaa-|-(S,diacylglyceryl)Cys-, in which Xaa is hydrophobic (preferably Leu), and Yaa (Ala or Ser) and Zaa (Gly or Ala) have small, neutral side chains.. The protein operates within protein modification; lipoprotein biosynthesis (signal peptide cleavage). In terms of biological role, this protein specifically catalyzes the removal of signal peptides from prolipoproteins. The chain is Lipoprotein signal peptidase from Shewanella oneidensis (strain ATCC 700550 / JCM 31522 / CIP 106686 / LMG 19005 / NCIMB 14063 / MR-1).